A 147-amino-acid polypeptide reads, in one-letter code: Nucleoside diphosphate kinase (147 aa).

6 residues coordinate ATP: lysine 9, phenylalanine 57, arginine 85, threonine 91, arginine 102, and asparagine 112. Histidine 115 (pros-phosphohistidine intermediate) is an active-site residue.

It belongs to the NDK family. Homotetramer. It depends on Mg(2+) as a cofactor.

Its subcellular location is the cytoplasm. The catalysed reaction is a 2'-deoxyribonucleoside 5'-diphosphate + ATP = a 2'-deoxyribonucleoside 5'-triphosphate + ADP. It catalyses the reaction a ribonucleoside 5'-diphosphate + ATP = a ribonucleoside 5'-triphosphate + ADP. Functionally, major role in the synthesis of nucleoside triphosphates other than ATP. The ATP gamma phosphate is transferred to the NDP beta phosphate via a ping-pong mechanism, using a phosphorylated active-site intermediate. This Kosmotoga olearia (strain ATCC BAA-1733 / DSM 21960 / TBF 19.5.1) protein is Nucleoside diphosphate kinase.